The sequence spans 475 residues: Protein trichome birefringence-like 6 (475 aa).

The helical; Signal-anchor for type II membrane protein transmembrane segment at 14–34 (VLAFIITIISSAIVFFTFFSS) threads the bilayer. The short motif at 211–213 (GDS) is the GDS motif element. The short motif at 450–464 (DCSHWCLPGVPDTWN) is the DCXHWCLPGXXDXWN motif element.

The protein belongs to the PC-esterase family. TBL subfamily.

The protein localises to the membrane. Functionally, may act as a bridging protein that binds pectin and other cell wall polysaccharides. Probably involved in maintaining esterification of pectins. May be involved in the specific O-acetylation of cell wall polymers. This chain is Protein trichome birefringence-like 6 (TBL6), found in Arabidopsis thaliana (Mouse-ear cress).